A 421-amino-acid chain; its full sequence is Lipid II:glycine glycyltransferase (421 aa).

Belongs to the FemABX family. In terms of assembly, monomer.

Its subcellular location is the cytoplasm. The catalysed reaction is beta-D-GlcNAc-(1-&gt;4)-Mur2Ac(oyl-L-Ala-D-isoglutaminyl-L-Lys-D-Ala-D-Ala)-di-trans,octa-cis-undecaprenyl diphosphate + glycyl-tRNA(Gly) = beta-D-GlcNAc-(1-&gt;4)-Mur2Ac(oyl-L-Ala-D-isoglutaminyl-L-Lys-(N(6)-Gly)-D-Ala-D-Ala)-di-trans,octa-cis-undecaprenyl diphosphate + tRNA(Gly) + H(+). In terms of biological role, catalyzes the incorporation of the first glycine of the pentaglycine interpeptide bridge, which is characteristic of the S.aureus peptidoglycan. This glycine is added to the epsilon-amino group of the L-lysine of the membrane-bound lipid II intermediate (GlcNAc-(beta-1,4)-N-acetylmuramic acid(-L-Ala-D-iGln-L-Lys-D-Ala-D-Ala)-pyrophosphoryl-undecaprenol), using glycyl-tRNA(Gly) as donor, in a ribosome-independent mechanism. The protein is Lipid II:glycine glycyltransferase (femX) of Staphylococcus aureus (strain bovine RF122 / ET3-1).